Here is a 302-residue protein sequence, read N- to C-terminus: Late embryogenesis abundant protein D-29 (302 aa).

Disordered stretches follow at residues 25–93 (HMPS…AKEY), 168–193 (VKNA…LADS), and 205–302 (AKEK…NHKN). Composition is skewed to basic and acidic residues over residues 34–70 (RDYS…HAAN) and 79–93 (AKDR…AKEY). Residues 205–286 (AKEKVRDMAD…KAEETIESAK (82 aa)) are compositionally biased toward basic and acidic residues.

Belongs to the LEA type 1 family.

LEA protein are late embryonic proteins abundant in higher plant seed embryos. There are two subsets of LEA proteins (5a and 5b), the first ones are expressed when the cotyledon weight reach 80 mg and the second set are expressed above 100 mg. The function of those proteins is not known. The protein is Late embryogenesis abundant protein D-29 of Gossypium hirsutum (Upland cotton).